The chain runs to 303 residues: MYYGFDIGGTKIALGVFDSGRQLQWEKRVPTPRDSYDAFLDAVCELVAEADRRFGCKGSVGIGIPGMPETEDGTLYAANVPAASGKPLRADLSARLDRDVRLDNDANCFALSEAWDDEFTQYPLVMGLILGTGVGGGLIFNGRPITGKSYITGEFGHMRLPVDALTMMGLDFPLRRCGCGQYGCIENYLSGRGFAWLYQHYYHQPLQAPEIIALYDQGDEQARAHVERYLDLLAVCLGNILTIVDPDLVVIGGGLSNFPAITTQLAERLPRHLLPVARVPRIERARHGDAGGMRGAAFLHLTD.

ATP-binding positions include 4 to 11 (GFDIGGTK) and 133 to 140 (GVGGGLIF). Residues His157, Cys177, Cys179, and Cys184 each contribute to the Zn(2+) site.

This sequence belongs to the ROK (NagC/XylR) family. NagK subfamily.

It catalyses the reaction N-acetyl-D-glucosamine + ATP = N-acetyl-D-glucosamine 6-phosphate + ADP + H(+). The protein operates within cell wall biogenesis; peptidoglycan recycling. Catalyzes the phosphorylation of N-acetyl-D-glucosamine (GlcNAc) derived from cell-wall degradation, yielding GlcNAc-6-P. This Escherichia coli O6:H1 (strain CFT073 / ATCC 700928 / UPEC) protein is N-acetyl-D-glucosamine kinase.